We begin with the raw amino-acid sequence, 238 residues long: MSSVEGMAQSIRSGTEPVRVQWLGRIDYQAAWDLQRELAEERIAGGPDSLLLLEHPEVYTAGRRTLAHERPVDGTPVIDTDRGGKITWHGPGQLVGYPIIGLAEPLDVVNFVRRLEESLISVCASFGVQTGRVEGRSGVWVAGDGGRPDRKIAAIGIRVARATTLHGFAINCDCDLGAFGSIVPCGIADAGVTSLTAELGRTVGVAEVIDRVSEAVLDALDGRIALGVASSPGVDSAQ.

One can recognise a BPL/LPL catalytic domain in the interval 44 to 224 (AGGPDSLLLL…AVLDALDGRI (181 aa)). Residues 82 to 89 (RGGKITWH), 154 to 156 (AIG), and 167 to 169 (GFA) contribute to the substrate site. C185 functions as the Acyl-thioester intermediate in the catalytic mechanism.

Belongs to the LipB family.

It is found in the cytoplasm. It catalyses the reaction octanoyl-[ACP] + L-lysyl-[protein] = N(6)-octanoyl-L-lysyl-[protein] + holo-[ACP] + H(+). It participates in protein modification; protein lipoylation via endogenous pathway; protein N(6)-(lipoyl)lysine from octanoyl-[acyl-carrier-protein]: step 1/2. In terms of biological role, catalyzes the transfer of endogenously produced octanoic acid from octanoyl-acyl-carrier-protein onto the lipoyl domains of lipoate-dependent enzymes. Lipoyl-ACP can also act as a substrate although octanoyl-ACP is likely to be the physiological substrate. In Mycolicibacterium gilvum (strain PYR-GCK) (Mycobacterium gilvum (strain PYR-GCK)), this protein is Octanoyltransferase.